A 129-amino-acid chain; its full sequence is Small ribosomal subunit protein uS12 (129 aa).

The disordered stretch occupies residues 1–25 (MPTYNQLVRFGRKSKTRKTKSPALE). Residues 10–20 (FGRKSKTRKTK) are compositionally biased toward basic residues. Residue Asp-89 is modified to 3-methylthioaspartic acid. The segment at 110–129 (RKQGRSRYGAPSKQVAVTKK) is disordered.

It belongs to the universal ribosomal protein uS12 family. In terms of assembly, part of the 30S ribosomal subunit. Contacts proteins S8 and S17. May interact with IF1 in the 30S initiation complex.

With S4 and S5 plays an important role in translational accuracy. In terms of biological role, interacts with and stabilizes bases of the 16S rRNA that are involved in tRNA selection in the A site and with the mRNA backbone. Located at the interface of the 30S and 50S subunits, it traverses the body of the 30S subunit contacting proteins on the other side and probably holding the rRNA structure together. The combined cluster of proteins S8, S12 and S17 appears to hold together the shoulder and platform of the 30S subunit. This Rickettsia canadensis (strain McKiel) protein is Small ribosomal subunit protein uS12.